Consider the following 137-residue polypeptide: Small ribosomal subunit protein uS9 (137 aa).

Positions 106–117 (KTEGYLTRDPRA) are enriched in basic and acidic residues. The interval 106-137 (KTEGYLTRDPRAKERRKYGLRKARKAPQYSKR) is disordered. Positions 118–137 (KERRKYGLRKARKAPQYSKR) are enriched in basic residues.

It belongs to the universal ribosomal protein uS9 family.

The sequence is that of Small ribosomal subunit protein uS9 from Thermosynechococcus vestitus (strain NIES-2133 / IAM M-273 / BP-1).